Consider the following 746-residue polypeptide: Long-chain-alcohol oxidase FAO3 (746 aa).

Residues 139 to 159 (ILTPIRAAFVYIKVAFLFCFF) traverse the membrane as a helical segment. 233 to 248 (CDVVVVGSGSGGGVAA) is a binding site for FAD. His-677 functions as the Proton acceptor in the catalytic mechanism.

Belongs to the GMC oxidoreductase family.

The protein localises to the membrane. It carries out the reaction a long-chain primary fatty alcohol + O2 = a long-chain fatty aldehyde + H2O2. Functionally, long-chain fatty alcohol oxidase involved in the omega-oxidation pathway of lipid degradation. This is Long-chain-alcohol oxidase FAO3 (FAO3) from Arabidopsis thaliana (Mouse-ear cress).